The following is a 69-amino-acid chain: Large ribosomal subunit protein uL29 (69 aa).

Belongs to the universal ribosomal protein uL29 family.

In Treponema denticola (strain ATCC 35405 / DSM 14222 / CIP 103919 / JCM 8153 / KCTC 15104), this protein is Large ribosomal subunit protein uL29.